Consider the following 355-residue polypeptide: 6-aminohexanoate-oligomer endohydrolase (355 aa).

T267 (nucleophile) is an active-site residue.

This sequence belongs to the peptidase S58 family. As to quaternary structure, heterotetramer composed of 4 alpha/beta heterodimers. Expressed as an inactive precursor that is cleaved autocatalytically at Asn266/Thr267 to generate an active enzyme composed of an alpha subunit and a beta subunit.

It carries out the reaction [N-(6-aminohexanoyl)]n + H2O = [N-(6-aminohexanoyl)]n-x + [N-(6-aminohexanoyl)]x.. It participates in xenobiotic degradation; nylon-6 oligomer degradation. Functionally, involved in the degradation of nylon-6 oligomers. Degrades cyclic and linear oligomers of 6-aminohexanoate (Ahx) with a degree of polymerization greater than three by an endo-type mode. Cannot use Ahx cyclic dimer or the Ahx linear dimer. The chain is 6-aminohexanoate-oligomer endohydrolase from Kocuria sp. (strain KY2).